The chain runs to 424 residues: Solute carrier family 67 member A1 (424 aa).

10 helical membrane-spanning segments follow: residues 26-46, 59-79, 90-110, 156-176, 184-204, 243-263, 276-296, 312-332, 334-354, and 391-411; these read ILLTYVLAATELTCLFMQFSI, IAFGYLQTTFGVLQLLGGPVF, AALTLSFLAALALYLLLAAAS, LGLCFGVGVILGSLLGGTLVS, AILAALATLLGAVLSFTCIPA, IFLVKVASNCPTGLFMVMFSI, AGYLMSFFGLLQMVTQGLVIG, VLVFIVVGLAMAWMSSVFHFC, LVPGLVFSLCTLNVVTDSMLI, and FGVPVFGHVQVAINTLVLLVL.

The protein belongs to the major facilitator (TC 2.A.1) superfamily. Organic cation transporter (TC 2.A.1.19) family. Interacts with RNF167. As to expression, expressed at high levels in adult and fetal kidney and liver, and adult colon. Expressed in fetal renal proximal tubules (at protein level). Expressed at lower levels in heart, brain and lung.

The protein resides in the apical cell membrane. In terms of biological role, may act as a transporter of organic cations based on a proton efflux antiport mechanism. May play a role in the transport of chloroquine and quinidine-related compounds in kidney. Plays a role in the regulation of lipid metabolism. In Homo sapiens (Human), this protein is Solute carrier family 67 member A1.